A 176-amino-acid chain; its full sequence is ATP-dependent protease subunit HslV (176 aa).

Thr-2 is an active-site residue. 3 residues coordinate Na(+): Gly-157, Cys-160, and Thr-163.

Belongs to the peptidase T1B family. HslV subfamily. In terms of assembly, a double ring-shaped homohexamer of HslV is capped on each side by a ring-shaped HslU homohexamer. The assembly of the HslU/HslV complex is dependent on binding of ATP.

It localises to the cytoplasm. The catalysed reaction is ATP-dependent cleavage of peptide bonds with broad specificity.. With respect to regulation, allosterically activated by HslU binding. In terms of biological role, protease subunit of a proteasome-like degradation complex believed to be a general protein degrading machinery. The polypeptide is ATP-dependent protease subunit HslV (Salmonella gallinarum (strain 287/91 / NCTC 13346)).